The following is a 110-amino-acid chain: Ribonuclease P protein component (110 aa).

This sequence belongs to the RnpA family. Consists of a catalytic RNA component (M1 or rnpB) and a protein subunit.

It carries out the reaction Endonucleolytic cleavage of RNA, removing 5'-extranucleotides from tRNA precursor.. RNaseP catalyzes the removal of the 5'-leader sequence from pre-tRNA to produce the mature 5'-terminus. It can also cleave other RNA substrates such as 4.5S RNA. The protein component plays an auxiliary but essential role in vivo by binding to the 5'-leader sequence and broadening the substrate specificity of the ribozyme. The protein is Ribonuclease P protein component of Mesoplasma florum (strain ATCC 33453 / NBRC 100688 / NCTC 11704 / L1) (Acholeplasma florum).